Here is a 60-residue protein sequence, read N- to C-terminus: Anionic antimicrobial peptide 2 (60 aa).

As to expression, hemolymph.

The protein localises to the secreted. Its function is as follows. Antimicrobial protein. Has antibacterial activity against the Gram-positive bacteria M.luteus (MIC=86.6 uM), L.monocytogenes (MIC=86.6 uM), and S.lutea (MIC=86.6 uM). Lacks antibacterial activity against the Gram-positive bacteria B.circulans and S.aureus, and the Gram-negative bacteria E.coli D31, E.coli ATCC 25922, and S.typhimurium. Has antifungal activity against P.pastoris (MIC=86.6 uM) and P.stipitis (MIC=90.9 uM), but lacks antifungal activity against A.niger, C.albicans, C.albidus, C.fructus, C.wickerhamii, F.oxysporum, S.cerevisiae, S.pombe, T.harzianum, and Z.marxianus. This Galleria mellonella (Greater wax moth) protein is Anionic antimicrobial peptide 2.